The primary structure comprises 380 residues: 1-deoxy-D-xylulose 5-phosphate reductoisomerase (380 aa).

Residues Thr-10, Gly-11, Ser-12, Ile-13, Gly-35, and Asn-121 each coordinate NADPH. Lys-122 contributes to the 1-deoxy-D-xylulose 5-phosphate binding site. Glu-123 serves as a coordination point for NADPH. Asp-147 is a Mn(2+) binding site. Residues Ser-148, Glu-149, Ser-173, and His-196 each coordinate 1-deoxy-D-xylulose 5-phosphate. Mn(2+) is bound at residue Glu-149. Gly-202 is an NADPH binding site. 4 residues coordinate 1-deoxy-D-xylulose 5-phosphate: Ser-209, Asn-214, Lys-215, and Glu-218. A Mn(2+)-binding site is contributed by Glu-218.

It belongs to the DXR family. The cofactor is Mg(2+). Mn(2+) serves as cofactor.

The enzyme catalyses 2-C-methyl-D-erythritol 4-phosphate + NADP(+) = 1-deoxy-D-xylulose 5-phosphate + NADPH + H(+). The protein operates within isoprenoid biosynthesis; isopentenyl diphosphate biosynthesis via DXP pathway; isopentenyl diphosphate from 1-deoxy-D-xylulose 5-phosphate: step 1/6. In terms of biological role, catalyzes the NADPH-dependent rearrangement and reduction of 1-deoxy-D-xylulose-5-phosphate (DXP) to 2-C-methyl-D-erythritol 4-phosphate (MEP). In Lachnospira eligens (strain ATCC 27750 / DSM 3376 / VPI C15-48 / C15-B4) (Eubacterium eligens), this protein is 1-deoxy-D-xylulose 5-phosphate reductoisomerase.